The following is an 80-amino-acid chain: Turripeptide VI/VII-01 (80 aa).

The first 22 residues, 1–22 (MRLQLILTITLLLTSFMGYRDA), serve as a signal peptide directing secretion. Residues 23-36 (AVIQGKTERSAMKM) constitute a propeptide that is removed on maturation. 3 cysteine pairs are disulfide-bonded: C48-C61, C50-C65, and C60-C70. Positions 77-80 (SSAI) are excised as a propeptide.

In terms of tissue distribution, expressed by the venom duct.

The protein resides in the secreted. The sequence is that of Turripeptide VI/VII-01 from Gemmula speciosa (Splendid gem-turris).